The sequence spans 450 residues: 23S rRNA (uracil(1939)-C(5))-methyltransferase RlmD (450 aa).

Residues methionine 1 to aspartate 62 enclose the TRAM domain. [4Fe-4S] cluster-binding residues include cysteine 75, cysteine 81, cysteine 84, and cysteine 163. The S-adenosyl-L-methionine site is built by glutamine 271, phenylalanine 300, asparagine 305, glutamate 321, asparagine 349, and aspartate 370. Cysteine 406 serves as the catalytic Nucleophile.

Belongs to the class I-like SAM-binding methyltransferase superfamily. RNA M5U methyltransferase family. RlmD subfamily.

The catalysed reaction is uridine(1939) in 23S rRNA + S-adenosyl-L-methionine = 5-methyluridine(1939) in 23S rRNA + S-adenosyl-L-homocysteine + H(+). Functionally, catalyzes the formation of 5-methyl-uridine at position 1939 (m5U1939) in 23S rRNA. The protein is 23S rRNA (uracil(1939)-C(5))-methyltransferase RlmD of Ralstonia nicotianae (strain ATCC BAA-1114 / GMI1000) (Ralstonia solanacearum).